The primary structure comprises 143 residues: Large ribosomal subunit protein uL22c (143 aa).

The protein belongs to the universal ribosomal protein uL22 family. As to quaternary structure, part of the 50S ribosomal subunit.

It localises to the plastid. Its subcellular location is the chloroplast. In terms of biological role, this protein binds specifically to 23S rRNA. The globular domain of the protein is located near the polypeptide exit tunnel on the outside of the subunit, while an extended beta-hairpin is found that lines the wall of the exit tunnel in the center of the 70S ribosome. This is Large ribosomal subunit protein uL22c (rpl22) from Piper cenocladum (Ant piper).